The primary structure comprises 953 residues: Translation initiation factor IF-2 (953 aa).

Disordered regions lie at residues 48–212 (SSFS…KIDF) and 279–367 (TKLK…FHEL). Basic and acidic residues-rich tracts occupy residues 80–89 (TGSEHVEKTQ), 98–111 (FKAE…EQAA), and 140–188 (QGDK…ENHK). Polar residues-rich tracts occupy residues 191–207 (RFTN…QSKS) and 282–291 (KSSNISAKST). Over residues 300-317 (ARPEKNRELTHHSQEGQK) the composition is skewed to basic and acidic residues. Positions 322–338 (SWNSQNQVRNQKNSNWN) are enriched in low complexity. A compositionally biased stretch (basic residues) spans 339–348 (KNKKTKKGKN). The 170-residue stretch at 454–623 (ERAPVVTIMG…LLVAEVEELK (170 aa)) folds into the tr-type G domain. Residues 463 to 470 (GHVDHGKT) are G1. 463–470 (GHVDHGKT) serves as a coordination point for GTP. Residues 488 to 492 (GITQH) are G2. Residues 509-512 (DTPG) form a G3 region. GTP contacts are provided by residues 509–513 (DTPGH) and 563–566 (NKID). A G4 region spans residues 563–566 (NKID). A G5 region spans residues 599–601 (SAK).

Belongs to the TRAFAC class translation factor GTPase superfamily. Classic translation factor GTPase family. IF-2 subfamily.

It localises to the cytoplasm. Its function is as follows. One of the essential components for the initiation of protein synthesis. Protects formylmethionyl-tRNA from spontaneous hydrolysis and promotes its binding to the 30S ribosomal subunits. Also involved in the hydrolysis of GTP during the formation of the 70S ribosomal complex. This Streptococcus pyogenes serotype M3 (strain ATCC BAA-595 / MGAS315) protein is Translation initiation factor IF-2.